The following is a 248-amino-acid chain: Myelin protein P0 (248 aa).

An N-terminal signal peptide occupies residues 1-29; it reads MAPGAPSSSPSPILAVLLFSSLVLSPAQA. Positions 30-143 constitute an Ig-like V-type domain; it reads IVVYTDREVH…DIVGKTSQVT (114 aa). Over 30-153 the chain is Extracellular; the sequence is IVVYTDREVH…LYVFEKVPTR (124 aa). Cysteines 50 and 127 form a disulfide. Asn-122 carries N-linked (GlcNAc...) (complex) asparagine glycosylation. Residues 154-179 traverse the membrane as a helical segment; it reads YGVVLGAVIGGVLGVVLLLLLLFYVV. The Cytoplasmic portion of the chain corresponds to 180 to 248; sequence RYCWLRRQAA…GLGESRKDKK (69 aa). A Phosphoserine; by PKC modification is found at Ser-210. The interval 224–248 is disordered; it reads DHSRSTKAVSEKKAKGLGESRKDKK. Ser-226 and Ser-228 each carry phosphoserine. 2 positions are modified to phosphoserine; by PKC: Ser-233 and Ser-243.

The protein belongs to the myelin P0 protein family. In terms of assembly, homodimer and homotetramer. In terms of processing, N-glycosylated; contains sulfate-substituted glycan. As to expression, found only in peripheral nervous system Schwann cells.

It localises to the cell membrane. The protein localises to the myelin membrane. Functionally, is an adhesion molecule necessary for normal myelination in the peripheral nervous system. It mediates adhesion between adjacent myelin wraps and ultimately drives myelin compaction. This is Myelin protein P0 (MPZ) from Homo sapiens (Human).